A 464-amino-acid polypeptide reads, in one-letter code: NADH dehydrogenase [ubiquinone] flavoprotein 1, mitochondrial (464 aa).

The N-terminal 20 residues, 1-20 (MLAARHFLGGLVPVRVSVRF), are a transit peptide targeting the mitochondrion. At K81 the chain carries N6-acetyllysine; alternate. Position 81 is an N6-succinyllysine; alternate (K81). 87–96 (GRGGAGFPTG) serves as a coordination point for NADH. K104 bears the N6-acetyllysine mark. 199–247 (RGAGAYICGEETALIESIEGKQGKPRLKPPFPADVGVFGCPTTVANVET) is an FMN binding site. The residue at position 257 (R257) is an Omega-N-methylarginine. Position 375 is an N6-acetyllysine (K375). 4 residues coordinate [4Fe-4S] cluster: C379, C382, C385, and C425.

This sequence belongs to the complex I 51 kDa subunit family. As to quaternary structure, core subunit of respiratory chain NADH dehydrogenase (Complex I) which is composed of 45 different subunits. This is a component of the flavoprotein-sulfur (FP) fragment of the enzyme. Interacts with RAB5IF. It depends on FMN as a cofactor. [4Fe-4S] cluster is required as a cofactor.

It localises to the mitochondrion inner membrane. It carries out the reaction a ubiquinone + NADH + 5 H(+)(in) = a ubiquinol + NAD(+) + 4 H(+)(out). Its function is as follows. Core subunit of the mitochondrial membrane respiratory chain NADH dehydrogenase (Complex I) which catalyzes electron transfer from NADH through the respiratory chain, using ubiquinone as an electron acceptor. Part of the peripheral arm of the enzyme, where the electrons from NADH are accepted by flavin mononucleotide (FMN) and then passed along a chain of iron-sulfur clusters by electron tunnelling to the final acceptor ubiquinone. Contains FMN, which is the initial electron acceptor as well as one iron-sulfur cluster. The protein is NADH dehydrogenase [ubiquinone] flavoprotein 1, mitochondrial of Mus musculus (Mouse).